The following is an 824-amino-acid chain: Probable acyl-CoA dehydrogenase IBR3 (824 aa).

Glycine 2 is modified (N-acetylglycine). FAD contacts are provided by residues 555 to 565 (FAMTEPQVASS), 589 to 591 (WTS), arginine 706, glutamine 776, and 776 to 780 (QVHGA). The Microbody targeting signal signature appears at 822 to 824 (SKL).

The protein belongs to the acyl-CoA dehydrogenase family. It depends on FAD as a cofactor.

It localises to the peroxisome. It catalyses the reaction a 2,3-saturated acyl-CoA + A = a 2,3-dehydroacyl-CoA + AH2. Functionally, involved with IBR1 and IBR10 in the peroxisomal beta-oxidation of indole-3-butyric acid (IBA) to form indole-3-acetic acid (IAA), a biologically active auxin. May be responsible for catalyzing the first step in IBA-CoA beta-oxidation. May play a role in defense response to pathogenic bacteria. This chain is Probable acyl-CoA dehydrogenase IBR3, found in Arabidopsis thaliana (Mouse-ear cress).